Reading from the N-terminus, the 348-residue chain is Anthranilate phosphoribosyltransferase (348 aa).

Residues Gly89, 92–93 (GD), Thr97, 99–102 (NIST), 117–125 (KHGNRSVSS), and Ser129 each bind 5-phospho-alpha-D-ribose 1-diphosphate. Position 89 (Gly89) interacts with anthranilate. Residue Ser101 coordinates Mg(2+). An anthranilate-binding site is contributed by Asn120. Anthranilate is bound at residue Arg175. Mg(2+) contacts are provided by Asp233 and Glu234.

Belongs to the anthranilate phosphoribosyltransferase family. In terms of assembly, homodimer. Mg(2+) is required as a cofactor.

The enzyme catalyses N-(5-phospho-beta-D-ribosyl)anthranilate + diphosphate = 5-phospho-alpha-D-ribose 1-diphosphate + anthranilate. Its pathway is amino-acid biosynthesis; L-tryptophan biosynthesis; L-tryptophan from chorismate: step 2/5. Catalyzes the transfer of the phosphoribosyl group of 5-phosphorylribose-1-pyrophosphate (PRPP) to anthranilate to yield N-(5'-phosphoribosyl)-anthranilate (PRA). The sequence is that of Anthranilate phosphoribosyltransferase from Shewanella sp. (strain W3-18-1).